Consider the following 340-residue polypeptide: Cell growth-regulated gene 1 protein (340 aa).

The protein belongs to the SMP-30/CGR1 family.

Involved in the cell growth regulation. The chain is Cell growth-regulated gene 1 protein (CGR1) from Candida albicans (strain SC5314 / ATCC MYA-2876) (Yeast).